Here is a 454-residue protein sequence, read N- to C-terminus: tRNA modification GTPase MnmE (454 aa).

(6S)-5-formyl-5,6,7,8-tetrahydrofolate contacts are provided by R23, E80, and K120. The 162-residue stretch at 216 to 377 folds into the TrmE-type G domain; it reads GMKVVIAGRP…LRDHLKQSMG (162 aa). N226 is a K(+) binding site. GTP contacts are provided by residues 226–231, 245–251, 270–273, 335–338, and 358–360; these read NAGKSS, TDIAGTT, DTAG, NKAD, and SAR. S230 provides a ligand contact to Mg(2+). Residues T245, I247, and T250 each coordinate K(+). T251 lines the Mg(2+) pocket. K454 lines the (6S)-5-formyl-5,6,7,8-tetrahydrofolate pocket.

It belongs to the TRAFAC class TrmE-Era-EngA-EngB-Septin-like GTPase superfamily. TrmE GTPase family. In terms of assembly, homodimer. Heterotetramer of two MnmE and two MnmG subunits. Requires K(+) as cofactor.

It localises to the cytoplasm. Its function is as follows. Exhibits a very high intrinsic GTPase hydrolysis rate. Involved in the addition of a carboxymethylaminomethyl (cmnm) group at the wobble position (U34) of certain tRNAs, forming tRNA-cmnm(5)s(2)U34. This chain is tRNA modification GTPase MnmE, found in Pectobacterium carotovorum subsp. carotovorum (strain PC1).